The primary structure comprises 313 residues: Porphobilinogen deaminase (313 aa).

At C242 the chain carries S-(dipyrrolylmethanemethyl)cysteine.

The protein belongs to the HMBS family. In terms of assembly, monomer. Dipyrromethane is required as a cofactor.

The catalysed reaction is 4 porphobilinogen + H2O = hydroxymethylbilane + 4 NH4(+). The protein operates within porphyrin-containing compound metabolism; protoporphyrin-IX biosynthesis; coproporphyrinogen-III from 5-aminolevulinate: step 2/4. Its function is as follows. Tetrapolymerization of the monopyrrole PBG into the hydroxymethylbilane pre-uroporphyrinogen in several discrete steps. This Pectobacterium atrosepticum (strain SCRI 1043 / ATCC BAA-672) (Erwinia carotovora subsp. atroseptica) protein is Porphobilinogen deaminase.